Here is a 288-residue protein sequence, read N- to C-terminus: MITQQIPHATTISALRTRVRSWREDRLSVGFVPTMGALHDGHVSLVRLAKAQCDRVVASVFVNPKQFAPGEDLDAYPRTLIDDAEKLTDAKCDLIYLPTPEAMYPDGYSAGVTLKGPALGLESAIRPHFFDGVATVVTKLFNQVRPDMAFFGEKDYQQLLVIRQLVKDLDFPINVLAGETGRDRDGLALSSRNAYLDSDQRTRAGQLNLILKAFAAALSGGASTSDATATALAAASDAFDAVDYVEARCAATLAELGDGPIDRPVRVLAAVRLGSTRLIDNMAANPPA.

ATP is bound at residue 35-42 (MGALHDGH). The active-site Proton donor is His42. Position 66 (Gln66) interacts with (R)-pantoate. Gln66 is a beta-alanine binding site. 152–155 (GEKD) provides a ligand contact to ATP. A (R)-pantoate-binding site is contributed by Gln158. Residues Gly181 and 189-192 (LSSR) each bind ATP.

The protein belongs to the pantothenate synthetase family. In terms of assembly, homodimer.

Its subcellular location is the cytoplasm. The enzyme catalyses (R)-pantoate + beta-alanine + ATP = (R)-pantothenate + AMP + diphosphate + H(+). It participates in cofactor biosynthesis; (R)-pantothenate biosynthesis; (R)-pantothenate from (R)-pantoate and beta-alanine: step 1/1. Functionally, catalyzes the condensation of pantoate with beta-alanine in an ATP-dependent reaction via a pantoyl-adenylate intermediate. This is Pantothenate synthetase from Maricaulis maris (strain MCS10) (Caulobacter maris).